A 133-amino-acid chain; its full sequence is Serine/threonine-protein kinase RsbT (133 aa).

It catalyses the reaction L-seryl-[protein] + ATP = O-phospho-L-seryl-[protein] + ADP + H(+). The enzyme catalyses L-threonyl-[protein] + ATP = O-phospho-L-threonyl-[protein] + ADP + H(+). In terms of biological role, provides the crucial link between the upstream module (communication of environmental stress) and the downstream module (integration of the environmental signals with signals of energy stress) that compose the signal transduction pathway controlling the sigma-B factor. Phosphorylates and inactivates its specific antagonist protein RsbS thanks to its serine kinase activity. Upon phosphorylation of RsbS, RsbT is released to stimulate RsbU, a PP2C phosphatase, thereby initiating the signaling cascade that ultimately activates sigma-B. The activity of the RsbU phosphatase may be stimulated by a long-lived interaction with RsbT and the serine kinase function of RsbT is not required to directly modify RsbU. Also phosphorylates RsbR thanks to its threonine kinase activity, preventing it to phosphorylate RsbT. This is Serine/threonine-protein kinase RsbT (rsbT) from Bacillus subtilis (strain 168).